The following is a 233-amino-acid chain: Large ribosomal subunit protein uL1 (233 aa).

It belongs to the universal ribosomal protein uL1 family. Part of the 50S ribosomal subunit.

Functionally, binds directly to 23S rRNA. The L1 stalk is quite mobile in the ribosome, and is involved in E site tRNA release. Its function is as follows. Protein L1 is also a translational repressor protein, it controls the translation of the L11 operon by binding to its mRNA. The chain is Large ribosomal subunit protein uL1 from Pseudoalteromonas atlantica (strain T6c / ATCC BAA-1087).